A 374-amino-acid polypeptide reads, in one-letter code: Ferroptosis suppressor protein 1 (374 aa).

The N-myristoyl glycine moiety is linked to residue Gly-2. The chain crosses the membrane as a helical span at residues 13-35 (VVIVGGGFAGIAAATQLKSFGIP). 6-hydroxy-FAD-binding positions include 17-21 (GGGFA), Arg-53, and Val-81. Lys-167 bears the N6-acetyllysine mark. 6-hydroxy-FAD is bound at residue Asp-285.

It belongs to the FAD-dependent oxidoreductase family. Requires 6-hydroxy-FAD as cofactor. Post-translationally, N-myristoylation at Gly-2 mediates the recruitment to lipid droplets and plasma membrane. In terms of processing, acetylation at Lys-167 prevents AIFM2 ubiquitination and degradation, thereby inhibiting ferroptosis. KAT2B mediates acetylation at Lys-167, while HDAC3 removes it. Ubiquitinated. AIFM2 undergoes 'Lys-29'-ubiquitination and proteasomal degradation, which is inhibited by acetylation at Lys-167.

Its subcellular location is the lipid droplet. The protein localises to the cell membrane. It localises to the cytoplasm. The protein resides in the mitochondrion membrane. It is found in the nucleus. The enzyme catalyses ubiquinone-10 + NADH + H(+) = ubiquinol-10 + NAD(+). It catalyses the reaction phylloquinone + NADH + H(+) = phylloquinol + NAD(+). It carries out the reaction menaquinone-4 + NADH + H(+) = menaquinol-4 + NAD(+). The catalysed reaction is menadione + NADH + H(+) = menadiol + NAD(+). The modification by 4-hydroxy-2-nonenal (HNE) adduction in mitochondria results in loss of the oxidoreductase activity and activation of a novel function in mitochondrial oxidative stress signaling. An NAD(P)H-dependent oxidoreductase that acts as a key inhibitor of ferroptosis. At the plasma membrane, catalyzes reduction of coenzyme Q/ubiquinone-10 to ubiquinol-10, a lipophilic radical-trapping antioxidant that prevents lipid oxidative damage and consequently ferroptosis. Acts in parallel to GPX4 to suppress phospholipid peroxidation and ferroptosis. This anti-ferroptotic function is independent of cellular glutathione levels. Also acts as a potent radical-trapping antioxidant by mediating warfarin-resistant vitamin K reduction in the canonical vitamin K cycle: catalyzes NAD(P)H-dependent reduction of vitamin K (phylloquinone, menaquinone-4 and menadione) to hydroquinone forms. Hydroquinones act as potent radical-trapping antioxidants inhibitor of phospholipid peroxidation and ferroptosis. May play a role in mitochondrial stress signaling. Upon oxidative stress, associates with the lipid peroxidation end product 4-hydroxy-2-nonenal (HNE) forming a lipid adduct devoid of oxidoreductase activity, which then translocates from mitochondria into the nucleus triggering DNA damage and cell death. This Xenopus tropicalis (Western clawed frog) protein is Ferroptosis suppressor protein 1 (aifm2).